The chain runs to 358 residues: Pyruvate dehydrogenase E1 component subunit alpha (358 aa).

Heterodimer of an alpha and a beta chain. Requires thiamine diphosphate as cofactor.

The catalysed reaction is N(6)-[(R)-lipoyl]-L-lysyl-[protein] + pyruvate + H(+) = N(6)-[(R)-S(8)-acetyldihydrolipoyl]-L-lysyl-[protein] + CO2. The pyruvate dehydrogenase complex catalyzes the overall conversion of pyruvate to acetyl-CoA and CO(2). It contains multiple copies of three enzymatic components: pyruvate dehydrogenase (E1), dihydrolipoamide acetyltransferase (E2) and lipoamide dehydrogenase (E3). This chain is Pyruvate dehydrogenase E1 component subunit alpha (pdhA), found in Mycoplasma pneumoniae (strain ATCC 29342 / M129 / Subtype 1) (Mycoplasmoides pneumoniae).